Reading from the N-terminus, the 367-residue chain is tRNA-specific 2-thiouridylase MnmA (367 aa).

ATP is bound by residues 12–19 and M38; that span reads GMSGGVDS. Residues 98 to 100 are interaction with target base in tRNA; the sequence is NPD. The active-site Nucleophile is the C103. C103 and C200 form a disulfide bridge. Position 128 (G128) interacts with ATP. Positions 150 to 152 are interaction with tRNA; the sequence is KDQ. C200 (cysteine persulfide intermediate) is an active-site residue. Residues 312-313 are interaction with tRNA; sequence RY.

Belongs to the MnmA/TRMU family. In terms of assembly, interacts with TusE.

It localises to the cytoplasm. It carries out the reaction S-sulfanyl-L-cysteinyl-[protein] + uridine(34) in tRNA + AH2 + ATP = 2-thiouridine(34) in tRNA + L-cysteinyl-[protein] + A + AMP + diphosphate + H(+). Catalyzes the 2-thiolation of uridine at the wobble position (U34) of tRNA(Lys), tRNA(Glu) and tRNA(Gln), leading to the formation of s(2)U34, the first step of tRNA-mnm(5)s(2)U34 synthesis. Sulfur is provided by IscS, via a sulfur-relay system. Binds ATP and its substrate tRNAs. This Serratia proteamaculans (strain 568) protein is tRNA-specific 2-thiouridylase MnmA.